The following is a 354-amino-acid chain: Cellular communication network factor 6 (354 aa).

Residues 1 to 23 (MQGLLFSTLLLAGLAQFCCRVQG) form the signal peptide. The region spanning 44-117 (RKQFCHWPCK…RYETGVCAYL (74 aa)) is the IGFBP N-terminal domain. 6 disulfide bridges follow: C48-C72, C52-C74, C54-C75, C61-C78, C86-C100, and C92-C114. N-linked (GlcNAc...) asparagine glycosylation is present at N178. The TSP type-1 domain occupies 208-253 (KCLVQATKWTPCSRTCGMGISNRVTNENSNCEMRKEKRLCYIQPCD). 5 cysteine pairs are disulfide-bonded: C268–C305, C285–C319, C296–C335, C299–C337, and C304–C341. The 75-residue stretch at 268–342 (CQPTFQLSKA…TSCVCQRNCR (75 aa)) folds into the CTCK domain. The N-linked (GlcNAc...) asparagine glycan is linked to N308.

The protein belongs to the CCN family. In terms of tissue distribution, predominant expression in adult kidney and testis and fetal kidney. Weaker expression found in placenta, ovary, prostate and small intestine. Also expressed in skeletally-derived cells such as synoviocytes and articular cartilage chondrocytes.

It is found in the secreted. It localises to the mitochondrion. Its function is as follows. Plays a role in mitochondrial electron transport and mitochondrial respiration. Through its regulation of the mitochondrial function may play a role in normal postnatal skeletal growth and cartilage homeostasis. In Homo sapiens (Human), this protein is Cellular communication network factor 6.